Here is a 443-residue protein sequence, read N- to C-terminus: Thymidine phosphorylase (443 aa).

This sequence belongs to the thymidine/pyrimidine-nucleoside phosphorylase family. As to quaternary structure, homodimer.

The enzyme catalyses thymidine + phosphate = 2-deoxy-alpha-D-ribose 1-phosphate + thymine. The protein operates within pyrimidine metabolism; dTMP biosynthesis via salvage pathway; dTMP from thymine: step 1/2. Its function is as follows. The enzymes which catalyze the reversible phosphorolysis of pyrimidine nucleosides are involved in the degradation of these compounds and in their utilization as carbon and energy sources, or in the rescue of pyrimidine bases for nucleotide synthesis. The sequence is that of Thymidine phosphorylase from Aliivibrio salmonicida (strain LFI1238) (Vibrio salmonicida (strain LFI1238)).